The primary structure comprises 301 residues: Radial spoke head 1 homolog (301 aa).

Residues 1–20 show a composition bias toward acidic residues; that stretch reads MSDLGSEELEEEGENDLGEY. The interval 1–41 is disordered; that stretch reads MSDLGSEELEEEGENDLGEYEGERNEVGERHGHGKARLPNG. MORN repeat units follow at residues 20-43, 44-66, 67-89, 90-112, 113-135, and 159-181; these read YEGE…NGDT, YEGS…NGAR, YTGD…DGSR, YEGE…NNDT, YTGE…ETGS, and YQGK…IGCE. Residues 21 to 31 show a composition bias toward basic and acidic residues; that stretch reads EGERNEVGERH. Residues 225-301 form a disordered region; the sequence is LSEEQPPPEG…FDEEPSDLQD (77 aa). A compositionally biased stretch (acidic residues) spans 249–261; the sequence is PSEDIQAEGFEGE. Positions 262–278 are enriched in basic and acidic residues; sequence LEPRGADEDVDTFRQES. The segment covering 279-290 has biased composition (polar residues); that stretch reads QENSYDIDQGNL. Acidic residues predominate over residues 292–301; sequence FDEEPSDLQD.

As to quaternary structure, component of the axonemal radial spoke 1 (RS1) and 2 (RS2) complexes, at least composed of spoke head proteins RSPH1, RSPH3, RSPH9 and the cilia-specific component RSPH4A or sperm-specific component RSPH6A, spoke stalk proteins RSPH14, DNAJB13, DYDC1, ROPN1L and NME5, and the RS1 complex-specific anchor protein IQUB. Interacts with RSPH3B. Interacts with RSPH4A. Interacts with RSPH6A. As to expression, expressed in the trachea, ependymal cells, oviduct and ependymal cells (at protein level). Germ cell specific. Specifically expressed in testis, and to a lower extent in ovary. Not expressed in somatic tissues.

It is found in the cytoplasm. Its subcellular location is the chromosome. The protein resides in the cytoskeleton. The protein localises to the cilium axoneme. It localises to the flagellum axoneme. In terms of biological role, functions as part of axonemal radial spoke complexes that play an important part in the motility of sperm and cilia. This is Radial spoke head 1 homolog (Rsph1) from Mus musculus (Mouse).